The following is a 455-amino-acid chain: tRNA modification GTPase MnmE (455 aa).

Arg24, Glu81, and Lys121 together coordinate (6S)-5-formyl-5,6,7,8-tetrahydrofolate. A TrmE-type G domain is found at 217-378 (GMKVVIAGRP…LKEHLKDIMG (162 aa)). A K(+)-binding site is contributed by Asn227. GTP contacts are provided by residues 227-232 (NAGKSS), 246-252 (TDIAGTT), 271-274 (DTAG), and 336-339 (NKAD). Residue Ser231 participates in Mg(2+) binding. 3 residues coordinate K(+): Thr246, Ile248, and Thr251. Thr252 contacts Mg(2+). Lys455 is a binding site for (6S)-5-formyl-5,6,7,8-tetrahydrofolate.

Belongs to the TRAFAC class TrmE-Era-EngA-EngB-Septin-like GTPase superfamily. TrmE GTPase family. In terms of assembly, homodimer. Heterotetramer of two MnmE and two MnmG subunits. K(+) serves as cofactor.

Its subcellular location is the cytoplasm. In terms of biological role, exhibits a very high intrinsic GTPase hydrolysis rate. Involved in the addition of a carboxymethylaminomethyl (cmnm) group at the wobble position (U34) of certain tRNAs, forming tRNA-cmnm(5)s(2)U34. The chain is tRNA modification GTPase MnmE from Psychromonas ingrahamii (strain DSM 17664 / CCUG 51855 / 37).